The chain runs to 204 residues: Outer-membrane lipoprotein carrier protein (204 aa).

Residues 1 to 21 (MKKIAVTCALLSAFAVSSVWA) form the signal peptide. The interval 169–204 (QRSSYQLKSQQNGAVDMSKFTFTPPQGVTVDDQRNK) is disordered. The span at 171–181 (SSYQLKSQQNG) shows a compositional bias: polar residues.

It belongs to the LolA family. In terms of assembly, monomer.

Its subcellular location is the periplasm. Functionally, participates in the translocation of lipoproteins from the inner membrane to the outer membrane. Only forms a complex with a lipoprotein if the residue after the N-terminal Cys is not an aspartate (The Asp acts as a targeting signal to indicate that the lipoprotein should stay in the inner membrane). This chain is Outer-membrane lipoprotein carrier protein, found in Cronobacter sakazakii (strain ATCC BAA-894) (Enterobacter sakazakii).